Here is a 443-residue protein sequence, read N- to C-terminus: tRNA modification GTPase MnmE (443 aa).

Residues arginine 23, glutamate 82, and lysine 121 each contribute to the (6S)-5-formyl-5,6,7,8-tetrahydrofolate site. In terms of domain architecture, TrmE-type G spans 215 to 364 (GTSIVLAGHP…LKQFIQQWMQ (150 aa)). Residue asparagine 225 participates in K(+) binding. GTP contacts are provided by residues 225 to 230 (NAGKSS), 244 to 250 (TDIPGTT), and 269 to 272 (DSAG). Residue serine 229 coordinates Mg(2+). 3 residues coordinate K(+): threonine 244, isoleucine 246, and threonine 249. Residue threonine 250 participates in Mg(2+) binding. A (6S)-5-formyl-5,6,7,8-tetrahydrofolate-binding site is contributed by lysine 443.

It belongs to the TRAFAC class TrmE-Era-EngA-EngB-Septin-like GTPase superfamily. TrmE GTPase family. Homodimer. Heterotetramer of two MnmE and two MnmG subunits. K(+) is required as a cofactor.

It localises to the cytoplasm. Exhibits a very high intrinsic GTPase hydrolysis rate. Involved in the addition of a carboxymethylaminomethyl (cmnm) group at the wobble position (U34) of certain tRNAs, forming tRNA-cmnm(5)s(2)U34. The chain is tRNA modification GTPase MnmE from Chlamydia abortus (strain DSM 27085 / S26/3) (Chlamydophila abortus).